A 418-amino-acid chain; its full sequence is Serine hydroxymethyltransferase (418 aa).

(6S)-5,6,7,8-tetrahydrofolate-binding positions include L121 and 125–127 (GHL). Residue K230 is modified to N6-(pyridoxal phosphate)lysine. (6S)-5,6,7,8-tetrahydrofolate is bound at residue 356–358 (SPF).

This sequence belongs to the SHMT family. Homodimer. It depends on pyridoxal 5'-phosphate as a cofactor.

The protein resides in the cytoplasm. The enzyme catalyses (6R)-5,10-methylene-5,6,7,8-tetrahydrofolate + glycine + H2O = (6S)-5,6,7,8-tetrahydrofolate + L-serine. The protein operates within one-carbon metabolism; tetrahydrofolate interconversion. It participates in amino-acid biosynthesis; glycine biosynthesis; glycine from L-serine: step 1/1. In terms of biological role, catalyzes the reversible interconversion of serine and glycine with tetrahydrofolate (THF) serving as the one-carbon carrier. This reaction serves as the major source of one-carbon groups required for the biosynthesis of purines, thymidylate, methionine, and other important biomolecules. Also exhibits THF-independent aldolase activity toward beta-hydroxyamino acids, producing glycine and aldehydes, via a retro-aldol mechanism. This chain is Serine hydroxymethyltransferase, found in Shewanella sediminis (strain HAW-EB3).